Consider the following 426-residue polypeptide: 5-aminovalerate aminotransferase DavT (426 aa).

Pyridoxal 5'-phosphate-binding positions include 112–113, Y139, and 240–243; these read GS and DEVQ. N6-(pyridoxal phosphate)lysine is present on K269. T298 is a binding site for pyridoxal 5'-phosphate.

It belongs to the class-III pyridoxal-phosphate-dependent aminotransferase family. The cofactor is pyridoxal 5'-phosphate.

The catalysed reaction is 5-aminopentanoate + 2-oxoglutarate = 5-oxopentanoate + L-glutamate. Catalyzes the conversion of 5-aminovalerate to 5-oxopentanoate. In Pseudomonas aeruginosa (strain ATCC 15692 / DSM 22644 / CIP 104116 / JCM 14847 / LMG 12228 / 1C / PRS 101 / PAO1), this protein is 5-aminovalerate aminotransferase DavT (davT).